Here is a 247-residue protein sequence, read N- to C-terminus: Caffeoyl-CoA O-methyltransferase 2 (247 aa).

Lys21 is a substrate binding site. Residues Thr63, Glu85, 87-88, Ser93, Asp111, and Ala140 each bind S-adenosyl-L-methionine; that span reads GV. Asp163 is a substrate binding site. Asp163 lines the a divalent metal cation pocket. Asp165 is an S-adenosyl-L-methionine binding site. The a divalent metal cation site is built by Asp189 and Asn190. Asn194 lines the substrate pocket.

Belongs to the class I-like SAM-binding methyltransferase superfamily. Cation-dependent O-methyltransferase family. CCoAMT subfamily. Requires a divalent metal cation as cofactor.

It catalyses the reaction (E)-caffeoyl-CoA + S-adenosyl-L-methionine = (E)-feruloyl-CoA + S-adenosyl-L-homocysteine + H(+). Its pathway is aromatic compound metabolism; phenylpropanoid biosynthesis. Methylates caffeoyl-CoA to feruloyl-CoA and 5-hydroxyferuloyl-CoA to sinapoyl-CoA. Plays a role in the synthesis of feruloylated polysaccharides. Involved in the reinforcement of the plant cell wall. Also involved in the responding to wounding or pathogen challenge by the increased formation of cell wall-bound ferulic acid polymers. This Eucalyptus globulus (Tasmanian blue gum) protein is Caffeoyl-CoA O-methyltransferase 2 (CCOAOMT2).